The chain runs to 495 residues: MSSSRPASSSSSRNRQSSQARVLAQTTLDAELNAEYEESGDSFDYSKLVEAQRDGPPVQQGRSEKVIAYLQHIQKGKLIQTFGCLLALDEKSFNVIAFSENAPEMLTTVSHAVPSVDDPPRLGIGTNVRSLFSDQGATALHKALGFADVSLLNPILVQCKTSGKPFYAIVHRATGCLVVDFEPVKPTEFPATAAGALQSYKLAAKAISKIQSLPGGSMEMLCNTVVKEVFDLTGYDRVMAYKFHEDDHGEVFSEITKPGLEPYLGLHYPATDIPQAARFLFMKNKVRMICDCRARSIKVIEAEALPFDISLCGSALRAPHSCHLQYMENMNSIASLVMAVVVNENEEDDEAESEQPAQQQKKKKLWGLLVCHHESPRYVPFPLRYACEFLAQVFAVHVNREFELEKQLREKNILKMQTMLSDMLFREASPLTIVSGNPNIMDLVKCDGAALLYGGKVWRLRNAPTESQIHDIAFWLSDVHRDSTGLSTDSLHDAG.

A compositionally biased stretch (low complexity) spans 1 to 21 (MSSSRPASSSSSRNRQSSQAR). Residues 1–24 (MSSSRPASSSSSRNRQSSQARVLA) form a disordered region. The GAF domain occupies 217–402 (SMEMLCNTVV…VFAVHVNREF (186 aa)). Cys322 contacts phytochromobilin.

The protein belongs to the phytochrome family. Homodimer. In terms of processing, contains one covalently linked phytochromobilin chromophore.

Functionally, regulatory photoreceptor which exists in two forms that are reversibly interconvertible by light: the Pr form that absorbs maximally in the red region of the spectrum and the Pfr form that absorbs maximally in the far-red region. Photoconversion of Pr to Pfr induces an array of morphogenic responses, whereas reconversion of Pfr to Pr cancels the induction of those responses. Pfr controls the expression of a number of nuclear genes including those encoding the small subunit of ribulose-bisphosphate carboxylase, chlorophyll A/B binding protein, protochlorophyllide reductase, rRNA, etc. It also controls the expression of its own gene(s) in a negative feedback fashion. This chain is Phytochrome A type 5 (PHYA5), found in Avena sativa (Oat).